The chain runs to 513 residues: ATP synthase subunit alpha (513 aa).

169–176 (GDRQTGKT) provides a ligand contact to ATP.

Belongs to the ATPase alpha/beta chains family. As to quaternary structure, F-type ATPases have 2 components, CF(1) - the catalytic core - and CF(0) - the membrane proton channel. CF(1) has five subunits: alpha(3), beta(3), gamma(1), delta(1), epsilon(1). CF(0) has three main subunits: a(1), b(2) and c(9-12). The alpha and beta chains form an alternating ring which encloses part of the gamma chain. CF(1) is attached to CF(0) by a central stalk formed by the gamma and epsilon chains, while a peripheral stalk is formed by the delta and b chains.

Its subcellular location is the cell inner membrane. The enzyme catalyses ATP + H2O + 4 H(+)(in) = ADP + phosphate + 5 H(+)(out). Functionally, produces ATP from ADP in the presence of a proton gradient across the membrane. The alpha chain is a regulatory subunit. The protein is ATP synthase subunit alpha of Klebsiella pneumoniae (strain 342).